The chain runs to 394 residues: Protein TsgA homolog (394 aa).

12 helical membrane passes run 11 to 31, 51 to 71, 76 to 96, 101 to 121, 134 to 154, 162 to 182, 206 to 226, 246 to 266, 274 to 294, 302 to 322, 334 to 354, and 363 to 383; these read WISY…GIVM, FLNA…EIIP, LVFG…GHNL, ISMF…TFLV, LLFT…AAAM, WYWV…LTLC, VGVL…LGFI, QLVS…SFIL, IVTV…STDN, ILAL…LGSL, FILT…GPIV, and LATA…LGFF.

This sequence belongs to the major facilitator superfamily. TsgA family.

It is found in the cell inner membrane. This is Protein TsgA homolog from Yersinia pseudotuberculosis serotype O:1b (strain IP 31758).